We begin with the raw amino-acid sequence, 72 residues long: Translation initiation factor IF-1 (72 aa).

In terms of domain architecture, S1-like spans 1–72; it reads MSKEEVLEFS…TKGRITYRYK (72 aa).

Belongs to the IF-1 family. In terms of assembly, component of the 30S ribosomal translation pre-initiation complex which assembles on the 30S ribosome in the order IF-2 and IF-3, IF-1 and N-formylmethionyl-tRNA(fMet); mRNA recruitment can occur at any time during PIC assembly.

The protein resides in the cytoplasm. One of the essential components for the initiation of protein synthesis. Stabilizes the binding of IF-2 and IF-3 on the 30S subunit to which N-formylmethionyl-tRNA(fMet) subsequently binds. Helps modulate mRNA selection, yielding the 30S pre-initiation complex (PIC). Upon addition of the 50S ribosomal subunit IF-1, IF-2 and IF-3 are released leaving the mature 70S translation initiation complex. This chain is Translation initiation factor IF-1, found in Bartonella quintana (strain Toulouse) (Rochalimaea quintana).